The following is a 476-amino-acid chain: Ubiquitin-conjugating enzyme E2 variant 3 (476 aa).

The region spanning 2-145 is the UEV domain; that stretch reads EFSAETLRQQ…EEELPLYSLS (144 aa). 185 to 213 serves as a coordination point for NAD(+); the sequence is GDMALACLLAVSAKGTAGKLLLLDPTDGE.

It in the N-terminal section; belongs to the ubiquitin-conjugating enzyme family. UEV subfamily. The protein in the C-terminal section; belongs to the LDH/MDH superfamily. In terms of assembly, homodimer.

Possible negative regulator of polyubiquitination. This Xenopus tropicalis (Western clawed frog) protein is Ubiquitin-conjugating enzyme E2 variant 3 (uevld).